Consider the following 156-residue polypeptide: C-type lectin lectoxin-Phi1 (156 aa).

Positions 1 to 23 (MGRFIFVSLGLLVLAFSLSGIGA) are cleaved as a signal peptide. Cystine bridges form between C27/C38, C55/C154, and C129/C146. A C-type lectin domain is found at 34-155 (HNVSCYKLIN…CNRRHRFLCK (122 aa)). N-linked (GlcNAc...) asparagine glycans are attached at residues N35 and N109. The short motif at 119–121 (EPN) is the Mannose-binding element. Residues E127, N142, and D143 each coordinate Ca(2+).

The protein belongs to the true venom lectin family. In terms of tissue distribution, expressed by the venom gland.

It localises to the secreted. Mannose-binding lectin which recognizes specific carbohydrate structures and agglutinates a variety of animal cells by binding to cell-surface glycoproteins and glycolipids. May be a calcium-dependent lectin. This chain is C-type lectin lectoxin-Phi1, found in Philodryas olfersii (Green snake).